A 231-amino-acid polypeptide reads, in one-letter code: Platelet-activating factor acetylhydrolase IB subunit alpha1 (231 aa).

Serine 2 is subject to N-acetylserine. The residue at position 2 (serine 2) is a Phosphoserine. Catalysis depends on residues serine 47, aspartate 192, and histidine 195.

The protein belongs to the 'GDSL' lipolytic enzyme family. Platelet-activating factor acetylhydrolase IB beta/gamma subunits subfamily. Forms a catalytic dimer which is either homodimer (alpha1/alpha1 homodimer) or heterodimer with PAFAH1B2 (alpha1/alpha2 heterodimer). Component of the cytosolic (PAF-AH (I)) heterotetrameric enzyme, which is composed of PAFAH1B1 (beta), PAFAH1B2 (alpha2) and PAFAH1B3 (alpha1) subunits. The catalytic activity of the enzyme resides in the alpha1 (PAFAH1B3) and alpha2 (PAFAH1B2) subunits, whereas the beta subunit (PAFAH1B1) has regulatory activity. Trimer formation is not essential for the catalytic activity. Interacts with VLDLR; this interaction may modulate the Reelin pathway.

Its subcellular location is the cytoplasm. It catalyses the reaction a 1-O-alkyl-2-acetyl-sn-glycero-3-phosphocholine + H2O = a 1-O-alkyl-sn-glycero-3-phosphocholine + acetate + H(+). The catalysed reaction is 1-O-hexadecyl-2-acetyl-sn-glycero-3-phosphocholine + H2O = 1-O-hexadecyl-sn-glycero-3-phosphocholine + acetate + H(+). It carries out the reaction 1-O-hexadecyl-2-acetyl-sn-glycero-3-phosphate + H2O = 1-O-hexadecyl-sn-glycero-3-phosphate + acetate + H(+). Its activity is regulated as follows. Beta subunit (PAFAH1B1) inhibits the acetylhydrolase activity of the alpha1/alpha1 catalytic homodimer. Its function is as follows. Alpha1 catalytic subunit of the cytosolic type I platelet-activating factor (PAF) acetylhydrolase (PAF-AH (I)) heterotetrameric enzyme that catalyzes the hydrolyze of the acetyl group at the sn-2 position of PAF and its analogs and modulates the action of PAF. The activity and substrate specificity of PAF-AH (I) are affected by its subunit composition. Both alpha1/alpha1 homodimer (PAFAH1B3/PAFAH1B3 homodimer) and alpha1/alpha2 heterodimer(PAFAH1B3/PAFAH1B2 heterodimer) hydrolyze 1-O-alkyl-2-acetyl-sn-glycero-3-phosphoric acid (AAGPA) more efficiently than PAF, but they have little hydrolytic activity towards 1-O-alkyl-2-acetyl-sn-glycero-3-phosphorylethanolamine (AAGPE). Plays an important role during the development of brain. The polypeptide is Platelet-activating factor acetylhydrolase IB subunit alpha1 (Pongo abelii (Sumatran orangutan)).